A 223-amino-acid polypeptide reads, in one-letter code: Deoxyribose-phosphate aldolase (223 aa).

The Proton donor/acceptor role is filled by Asp89. Lys152 functions as the Schiff-base intermediate with acetaldehyde in the catalytic mechanism. Lys181 serves as the catalytic Proton donor/acceptor.

The protein belongs to the DeoC/FbaB aldolase family. DeoC type 1 subfamily.

It localises to the cytoplasm. The enzyme catalyses 2-deoxy-D-ribose 5-phosphate = D-glyceraldehyde 3-phosphate + acetaldehyde. It functions in the pathway carbohydrate degradation; 2-deoxy-D-ribose 1-phosphate degradation; D-glyceraldehyde 3-phosphate and acetaldehyde from 2-deoxy-alpha-D-ribose 1-phosphate: step 2/2. Catalyzes a reversible aldol reaction between acetaldehyde and D-glyceraldehyde 3-phosphate to generate 2-deoxy-D-ribose 5-phosphate. The protein is Deoxyribose-phosphate aldolase of Bacillus mycoides (strain KBAB4) (Bacillus weihenstephanensis).